The sequence spans 89 residues: Small ribosomal subunit protein uS15 (89 aa).

This sequence belongs to the universal ribosomal protein uS15 family. In terms of assembly, part of the 30S ribosomal subunit. Forms a bridge to the 50S subunit in the 70S ribosome, contacting the 23S rRNA.

In terms of biological role, one of the primary rRNA binding proteins, it binds directly to 16S rRNA where it helps nucleate assembly of the platform of the 30S subunit by binding and bridging several RNA helices of the 16S rRNA. Its function is as follows. Forms an intersubunit bridge (bridge B4) with the 23S rRNA of the 50S subunit in the ribosome. This chain is Small ribosomal subunit protein uS15, found in Vibrio parahaemolyticus serotype O3:K6 (strain RIMD 2210633).